We begin with the raw amino-acid sequence, 33 residues long: Protamine-M6/M7 (33 aa).

The segment at 1–33 (PRRRRETSRPIRRRRRARRAPIRRRRRVVRRRR) is disordered.

In terms of tissue distribution, testis.

The protein resides in the nucleus. It localises to the chromosome. Protamines substitute for histones in the chromatin of sperm during the haploid phase of spermatogenesis. They compact sperm DNA into a highly condensed, stable and inactive complex. The protein is Protamine-M6/M7 of Mugil cephalus (Flathead mullet).